The following is a 283-amino-acid chain: 4-hydroxy-tetrahydrodipicolinate synthase (283 aa).

Threonine 46 is a binding site for pyruvate. Tyrosine 134 functions as the Proton donor/acceptor in the catalytic mechanism. Lysine 162 functions as the Schiff-base intermediate with substrate in the catalytic mechanism. A pyruvate-binding site is contributed by isoleucine 208.

It belongs to the DapA family. As to quaternary structure, homotetramer; dimer of dimers.

It localises to the cytoplasm. The catalysed reaction is L-aspartate 4-semialdehyde + pyruvate = (2S,4S)-4-hydroxy-2,3,4,5-tetrahydrodipicolinate + H2O + H(+). It functions in the pathway amino-acid biosynthesis; L-lysine biosynthesis via DAP pathway; (S)-tetrahydrodipicolinate from L-aspartate: step 3/4. Catalyzes the condensation of (S)-aspartate-beta-semialdehyde [(S)-ASA] and pyruvate to 4-hydroxy-tetrahydrodipicolinate (HTPA). The polypeptide is 4-hydroxy-tetrahydrodipicolinate synthase (Methanothermobacter thermautotrophicus (strain ATCC 29096 / DSM 1053 / JCM 10044 / NBRC 100330 / Delta H) (Methanobacterium thermoautotrophicum)).